The primary structure comprises 184 residues: NADH-quinone oxidoreductase subunit B 2 (184 aa).

The [4Fe-4S] cluster site is built by C59, C60, C125, and C153.

The protein belongs to the complex I 20 kDa subunit family. As to quaternary structure, NDH-1 is composed of 14 different subunits. Subunits NuoB, C, D, E, F, and G constitute the peripheral sector of the complex. [4Fe-4S] cluster serves as cofactor.

It localises to the cell inner membrane. The catalysed reaction is a quinone + NADH + 5 H(+)(in) = a quinol + NAD(+) + 4 H(+)(out). Functionally, NDH-1 shuttles electrons from NADH, via FMN and iron-sulfur (Fe-S) centers, to quinones in the respiratory chain. Couples the redox reaction to proton translocation (for every two electrons transferred, four hydrogen ions are translocated across the cytoplasmic membrane), and thus conserves the redox energy in a proton gradient. This Solibacter usitatus (strain Ellin6076) protein is NADH-quinone oxidoreductase subunit B 2.